Reading from the N-terminus, the 160-residue chain is Cyanate hydratase (160 aa).

Active-site residues include R100, E103, and S126.

The protein belongs to the cyanase family.

The enzyme catalyses cyanate + hydrogencarbonate + 3 H(+) = NH4(+) + 2 CO2. Functionally, catalyzes the reaction of cyanate with bicarbonate to produce ammonia and carbon dioxide. This chain is Cyanate hydratase, found in Aspergillus flavus (strain ATCC 200026 / FGSC A1120 / IAM 13836 / NRRL 3357 / JCM 12722 / SRRC 167).